We begin with the raw amino-acid sequence, 651 residues long: ATP-dependent zinc metalloprotease FtsH (651 aa).

The Extracellular segment spans residues 1–134 (MIVFATILFG…FTTDPQTAGP (134 aa)). A helical transmembrane segment spans residues 135 to 155 (WARAIAVMAPFVLILLLFFLM). Residues 156–651 (TRTGRSASQS…PAMSVNGHRG (496 aa)) lie on the Cytoplasmic side of the membrane. 229–236 (GPPGTGKT) contributes to the ATP binding site. His451 is a Zn(2+) binding site. Glu452 is a catalytic residue. His455 and Asp527 together coordinate Zn(2+).

In the central section; belongs to the AAA ATPase family. It in the C-terminal section; belongs to the peptidase M41 family. Homohexamer. The cofactor is Zn(2+).

The protein localises to the cell membrane. Its function is as follows. Acts as a processive, ATP-dependent zinc metallopeptidase for both cytoplasmic and membrane proteins. Plays a role in the quality control of integral membrane proteins. The sequence is that of ATP-dependent zinc metalloprotease FtsH from Rubrobacter xylanophilus (strain DSM 9941 / JCM 11954 / NBRC 16129 / PRD-1).